The following is an 82-amino-acid chain: ATP synthase subunit c (82 aa).

The next 2 membrane-spanning stretches (helical) occupy residues 7–27 (AASV…PGIG) and 57–77 (LAFM…LLFA).

The protein belongs to the ATPase C chain family. In terms of assembly, F-type ATPases have 2 components, F(1) - the catalytic core - and F(0) - the membrane proton channel. F(1) has five subunits: alpha(3), beta(3), gamma(1), delta(1), epsilon(1). F(0) has four main subunits: a(1), b(1), b'(1) and c(10-14). The alpha and beta chains form an alternating ring which encloses part of the gamma chain. F(1) is attached to F(0) by a central stalk formed by the gamma and epsilon chains, while a peripheral stalk is formed by the delta, b and b' chains.

It localises to the cellular thylakoid membrane. Its function is as follows. F(1)F(0) ATP synthase produces ATP from ADP in the presence of a proton or sodium gradient. F-type ATPases consist of two structural domains, F(1) containing the extramembraneous catalytic core and F(0) containing the membrane proton channel, linked together by a central stalk and a peripheral stalk. During catalysis, ATP synthesis in the catalytic domain of F(1) is coupled via a rotary mechanism of the central stalk subunits to proton translocation. In terms of biological role, key component of the F(0) channel; it plays a direct role in translocation across the membrane. A homomeric c-ring of between 10-14 subunits forms the central stalk rotor element with the F(1) delta and epsilon subunits. The polypeptide is ATP synthase subunit c (Synechococcus sp. (strain WH7803)).